The sequence spans 308 residues: Taste receptor type 2 member 43 (308 aa).

Residue methionine 1 is a topological domain, extracellular. The chain crosses the membrane as a helical span at residues isoleucine 2 to cysteine 22. Residues alanine 23 to glutamine 46 are Cytoplasmic-facing. Residues isoleucine 47–tyrosine 67 traverse the membrane as a helical segment. At alanine 68 to asparagine 86 the chain is on the extracellular side. The helical transmembrane segment at leucine 87 to leucine 107 threads the bilayer. Residues leucine 108–lysine 126 lie on the Cytoplasmic side of the membrane. A helical transmembrane segment spans residues serine 127–valine 147. At asparagine 148–threonine 178 the chain is on the extracellular side. Asparagine 161 and asparagine 176 each carry an N-linked (GlcNAc...) asparagine glycan. Residues valine 179–isoleucine 199 form a helical membrane-spanning segment. Over cysteine 200 to glutamine 229 the chain is Cytoplasmic. A helical membrane pass occupies residues threonine 230–tryptophan 249. At serine 250–alanine 258 the chain is on the extracellular side. A helical transmembrane segment spans residues valine 259 to isoleucine 279. Over tryptophan 280 to proline 308 the chain is Cytoplasmic.

Belongs to the G-protein coupled receptor T2R family.

Its subcellular location is the membrane. The protein localises to the cell projection. The protein resides in the cilium membrane. Gustducin-coupled receptor immplicated in the perception of bitter compounds in the oral cavity and the gastrointestinal tract. Signals through PLCB2 and the calcium-regulated cation channel TRPM5. Activated by the sulfonyl amide sweeteners saccharin and acesulfame K. In airway epithelial cells, binding of bitter compounds increases the intracellular calcium ion concentration and stimulates ciliary beat frequency. May act as chemosensory receptors in airway epithelial cells to detect and eliminate potential noxious agents from the airways. This Papio hamadryas (Hamadryas baboon) protein is Taste receptor type 2 member 43 (TAS2R43).